We begin with the raw amino-acid sequence, 250 residues long: Homeobox protein Dlx4a (250 aa).

The homeobox DNA-binding region spans 123–182; the sequence is IRKPRTIYSSLQLQALNQRFQQTQYLALPERADLAAKLGLTQTQVKIWFQNKRSKYKKIM. The disordered stretch occupies residues 182-202; sequence MKHGSSGPEGEHLQAASASGA.

The protein belongs to the distal-less homeobox family.

It is found in the nucleus. The sequence is that of Homeobox protein Dlx4a (dlx4a) from Danio rerio (Zebrafish).